The primary structure comprises 347 residues: Phosphoribosylformylglycinamidine cyclo-ligase (347 aa).

Belongs to the AIR synthase family.

The protein localises to the cytoplasm. It carries out the reaction 2-formamido-N(1)-(5-O-phospho-beta-D-ribosyl)acetamidine + ATP = 5-amino-1-(5-phospho-beta-D-ribosyl)imidazole + ADP + phosphate + H(+). It functions in the pathway purine metabolism; IMP biosynthesis via de novo pathway; 5-amino-1-(5-phospho-D-ribosyl)imidazole from N(2)-formyl-N(1)-(5-phospho-D-ribosyl)glycinamide: step 2/2. In Yersinia enterocolitica serotype O:8 / biotype 1B (strain NCTC 13174 / 8081), this protein is Phosphoribosylformylglycinamidine cyclo-ligase.